Here is a 334-residue protein sequence, read N- to C-terminus: Glyceraldehyde-3-phosphate dehydrogenase B (334 aa).

Residues 12–13 (RI), Asp34, and Ser121 contribute to the NAD(+) site. D-glyceraldehyde 3-phosphate is bound by residues 149 to 151 (SCT), Thr180, 209 to 210 (TG), and Arg232. Residue Cys150 is the Nucleophile of the active site. Asn314 contacts NAD(+).

The protein belongs to the glyceraldehyde-3-phosphate dehydrogenase family. In terms of assembly, homotetramer.

It catalyses the reaction D-glyceraldehyde 3-phosphate + phosphate + NAD(+) = (2R)-3-phospho-glyceroyl phosphate + NADH + H(+). Its pathway is carbohydrate degradation; glycolysis; pyruvate from D-glyceraldehyde 3-phosphate: step 1/5. Glyceraldehyde-3-phosphate dehydrogenase; part of the gene cluster that mediates the biosynthesis of heptelidic acid (HA), a sesquiterpene lactone that acts as an inhibitor of glyceraldehyde-3-phosphatedehydrogenase (GAPDH) and a growth inhibitor of the salt-tolerant lactic acid bacteria in soy sauce brewing. The GAPDPH hepG/gdpB shows much higher resistance to HA than the GAPDH gpdA located outside of the cluster, but it does not seem to act in self-resistance. The polypeptide is Glyceraldehyde-3-phosphate dehydrogenase B (Aspergillus oryzae (strain ATCC 42149 / RIB 40) (Yellow koji mold)).